A 687-amino-acid polypeptide reads, in one-letter code: Mitochondrial 15S rRNA processing factor ppr3 (687 aa).

The N-terminal 49 residues, 1-49 (MLNKCSGSLTLLAVRRFCGPCRRLHYHKDNPNNINIAKNLLNNNIQARC), are a transit peptide targeting the mitochondrion. PPR repeat units lie at residues 262-296 (NGLV…SITP), 297-331 (SKDF…ATSI), 334-368 (SAET…PIDP), and 372-407 (TTFV…GLRP).

The protein belongs to the CCM1 family. In terms of assembly, binds to mitochondrial small subunit 15S rRNA.

The protein localises to the mitochondrion. Functionally, regulates mitochondrial small subunit maturation by controlling 15S rRNA 5'-end processing. Localizes to the 5' precursor of the 15S rRNA in a position that is subsequently occupied by mS47 in the mature yeast mtSSU. Uses structure and sequence-specific RNA recognition, binding to a single-stranded region of the precursor and specifically recognizing bases -6 to -1. The exchange of Ccm1 for mS47 is coupled to the irreversible removal of precursor rRNA that is accompanied by conformational changes of the mitoribosomal proteins uS5m and mS26. These conformational changes signal completion of 5'-end rRNA processing through protection of the mature 5'-end of the 15S rRNA and stabilization of mS47. The removal of the 5' precursor together with the dissociation of Ccm1 may be catalyzed by the 5'-3' exoribonuclease Pet127. Involved in the specific removal of group I introns in mitochondrial encoded transcripts. This is Mitochondrial 15S rRNA processing factor ppr3 from Schizosaccharomyces pombe (strain 972 / ATCC 24843) (Fission yeast).